Consider the following 404-residue polypeptide: MLKYEYILVRYGEMTTKGKNRSKFVSTLKDNVKFKLKKFPNIKIDATHDRMYIQLNGEDHEAVSERLKDVFGIHKFNLAMKVPSELEDIKEGALAAFLQVKGDVKTFKITVHRSYKHFPMRTMELLPEIGGHILENTEDITVDVHNPDVNVRVEIRSGYSYIMCDERMGAGGLPVGVGGKVMVLLSGGIDSPVAAYLTMKRGVSVEAVHFHSPPFTSERAKQKVIDLAQELTKYCKRVTLHLVPFTEVQKTINKEIPSSYSMTVMRRMMMRITERIAEERNALAITTGESLGQVASQTLDSMHTINEVTNYPVIRPLITMDKLEIIKIAEEIGTYDISIRPYEDCCTVFTPASPATKPKREKANRFEAKYDFTPLIDEAVANKETMVLQTVEVVAEEEKFEELF.

The THUMP domain maps to 61–166; that stretch reads EAVSERLKDV…SGYSYIMCDE (106 aa). ATP-binding positions include 184–185, 209–210, Arg-266, Gly-288, and Gln-297; these read LL and HF.

This sequence belongs to the ThiI family.

The protein resides in the cytoplasm. The enzyme catalyses [ThiI sulfur-carrier protein]-S-sulfanyl-L-cysteine + a uridine in tRNA + 2 reduced [2Fe-2S]-[ferredoxin] + ATP + H(+) = [ThiI sulfur-carrier protein]-L-cysteine + a 4-thiouridine in tRNA + 2 oxidized [2Fe-2S]-[ferredoxin] + AMP + diphosphate. It carries out the reaction [ThiS sulfur-carrier protein]-C-terminal Gly-Gly-AMP + S-sulfanyl-L-cysteinyl-[cysteine desulfurase] + AH2 = [ThiS sulfur-carrier protein]-C-terminal-Gly-aminoethanethioate + L-cysteinyl-[cysteine desulfurase] + A + AMP + 2 H(+). Its pathway is cofactor biosynthesis; thiamine diphosphate biosynthesis. Its function is as follows. Catalyzes the ATP-dependent transfer of a sulfur to tRNA to produce 4-thiouridine in position 8 of tRNAs, which functions as a near-UV photosensor. Also catalyzes the transfer of sulfur to the sulfur carrier protein ThiS, forming ThiS-thiocarboxylate. This is a step in the synthesis of thiazole, in the thiamine biosynthesis pathway. The sulfur is donated as persulfide by IscS. The protein is Probable tRNA sulfurtransferase of Bacillus cereus (strain B4264).